Consider the following 428-residue polypeptide: Elongation factor 1-alpha (428 aa).

Residues 5-225 form the tr-type G domain; sequence KPVLNVAFIG…DKFQPPEKPT (221 aa). The interval 14–21 is G1; the sequence is GHVDAGKS. 14-21 serves as a coordination point for GTP; it reads GHVDAGKS. Ser21 lines the Mg(2+) pocket. Residues 70–74 are G2; the sequence is GVTID. Residues 91 to 94 form a G3 region; it reads DCPG. Residues 91 to 95 and 149 to 152 contribute to the GTP site; these read DCPGH and NKMD. The G4 stretch occupies residues 149–152; it reads NKMD. The G5 stretch occupies residues 189–191; the sequence is ASL.

The protein belongs to the TRAFAC class translation factor GTPase superfamily. Classic translation factor GTPase family. EF-Tu/EF-1A subfamily.

The protein resides in the cytoplasm. The catalysed reaction is GTP + H2O = GDP + phosphate + H(+). Functionally, GTP hydrolase that promotes the GTP-dependent binding of aminoacyl-tRNA to the A-site of ribosomes during protein biosynthesis. The chain is Elongation factor 1-alpha from Methanocaldococcus jannaschii (strain ATCC 43067 / DSM 2661 / JAL-1 / JCM 10045 / NBRC 100440) (Methanococcus jannaschii).